The following is a 68-amino-acid chain: Inhibitor of trypsin and hageman factor (68 aa).

S1 is modified (N-acetylserine). A disulfide bridge links C3 with C48.

It belongs to the protease inhibitor I13 (potato type I serine protease inhibitor) family.

In terms of biological role, specifically inhibits both trypsin and activated Hageman factor. The protein is Inhibitor of trypsin and hageman factor of Cucurbita maxima (Pumpkin).